The following is a 266-amino-acid chain: Interleukin-1 beta (266 aa).

Positions 1–113 (MATVPEPTNE…ETYDDDLLCD (113 aa)) are excised as a propeptide.

The protein belongs to the IL-1 family. In terms of assembly, monomer. In its precursor form, weakly interacts with full-length MEFV; the mature cytokine does not interact at all. Interacts with integrins ITGAV:ITGBV and ITGA5:ITGB1; integrin-binding is required for IL1B signaling. Interacts with cargo receptor TMED10; the interaction is direct and is required for the secretion of IL1B mature form. Interacts with HSP90AB1; the interaction facilitates cargo translocation into the ERGIC. Interacts with HSP90B1; the interaction facilitates cargo translocation into the ERGIC.

The protein resides in the cytoplasm. It is found in the cytosol. The protein localises to the secreted. Its subcellular location is the lysosome. It localises to the extracellular exosome. In terms of biological role, potent pro-inflammatory cytokine. Initially discovered as the major endogenous pyrogen, induces prostaglandin synthesis, neutrophil influx and activation, T-cell activation and cytokine production, B-cell activation and antibody production, and fibroblast proliferation and collagen production. Promotes Th17 differentiation of T-cells. Synergizes with IL12/interleukin-12 to induce IFNG synthesis from T-helper 1 (Th1) cells. Plays a role in angiogenesis by inducing VEGF production synergistically with TNF and IL6. Involved in transduction of inflammation downstream of pyroptosis: its mature form is specifically released in the extracellular milieu by passing through the gasdermin-D (GSDMD) pore. This is Interleukin-1 beta (IL1B) from Delphinapterus leucas (Beluga whale).